The following is a 289-amino-acid chain: Glucanase inhibitor protein 2 (289 aa).

An N-terminal signal peptide occupies residues 1–19 (MKVTATIAAASMAIAAASA). The Peptidase S1 domain occupies 29–257 (ILGGSIIPSG…ALKWVNPIIK (229 aa)). An intrachain disulfide couples C56 to C72. Residues N89, N104, and N109 are each glycosylated (N-linked (GlcNAc...) asparagine). 2 disulfide bridges follow: C180/C192 and C202/C233.

It belongs to the peptidase S1 family.

Its subcellular location is the secreted. Its function is as follows. Secreted effector that suppresses host plant glucan elicitor-mediated defense responses. Targets host endoglucanases and inhibits the endoglucanase-mediated release of elicitor-active glucan oligosaccharides from P.sojae cell walls. The polypeptide is Glucanase inhibitor protein 2 (Phytophthora sojae (Soybean stem and root rot agent)).